The primary structure comprises 884 residues: MEVQLGLGRVYPRPPSKTYRGAFQNLFQSVREVIQNPGPRHPEAASAAPPGARLQQQQETSPPQQQQQQQGEDGSPQAQSRGPTGYLALDEEQQPSQQQSALECHPESGCVPEPGAAAAASKGLQQQPPAPSDEDDSAVPSTLSLLGPTFPGLSSCSADLKDILSEAGTMQLLQQQQQEAVSEGSSSGRAREAAGAPTSSKDSYLGGTSTISDSAKELCKAVSVSMGLGVETLEHLSPGEQLRGDCMYAPLLGGPPAVRPTPCAPLAECKGSLLDDSADKGTEEPAEYTPFKGSYTQGLEGESLGCSGSSEAGSSGTLELPSTLSLYKSGALEEAASYQSRDYYNFPLALAGPPPPPLPPHPHARIKLENPLDYGSSWAAAAAQCRFGDLASLHGGGATGPGSGSPSAAAASSWHTLFTAEEGQLYGPCGGGGGGTSEAGAVTPYGYSRPPQGLAGQEGDFPAPDVWYPSGVVSRVPYPSPSCVKSEMGPWMESYSGPYGDVRLETARDHVLPIDYYFPPQKTCLICGDEASGCHYGALTCGSCKVFFKRAAEGKQKYLCASRNDCTIDKFRRKNCPSCRLRKCYEAGMTLGARKLKKLGNLKLQEEGEASSATSPTEESSQKLTVSHIEGYECQPIFLNVLEAIEPGVVCAGHDNNQPDSFAALLSSLNELGERQLVHVVKWAKALPGFRNLHVDDQMAVIQYSWMGLMVFAMGWRSFTNVNSRMLYFAPDLVFNEYRMHKSRMYSQCVRMRHLSQEFGWLQITPQEFLCMKALLLFSIIPVDGLKNQKFFDELRMNYIKELDRIIACKRKNPTSCSRRFYQLTKLLDSVQPIARELHQFTFDLLIKSHMVSVDFPEMMAEIISVQVPKILSGKVKPIYFHTQ.

Positions 1–522 (MEVQLGLGRV…PIDYYFPPQK (522 aa)) are modulating. Residues 1 to 551 (MEVQLGLGRV…GSCKVFFKRA (551 aa)) form an interaction with ZNF318 region. Disordered stretches follow at residues 33 to 145 (VIQN…TLSL) and 174 to 207 (QQQQQEAVSEGSSSGRAREAAGAPTSSKDSYLGG). Low complexity-rich tracts occupy residues 55-79 (QQQQETSPPQQQQQQQGEDGSPQAQ) and 174-196 (QQQQQEAVSEGSSSGRAREAAGA). Residue Ser-61 is modified to Phosphoserine; by CDK9. Residue Ser-75 is modified to Phosphoserine. Residues 197 to 207 (PTSSKDSYLGG) are compositionally biased toward polar residues. Position 204 is a phosphotyrosine; by CSK (Tyr-204). At Ser-237 the chain carries Phosphoserine. Position 248 is a phosphotyrosine; by CSK and TNK2 (Tyr-248). The disordered stretch occupies residues 275–294 (DDSADKGTEEPAEYTPFKGS). Phosphotyrosine; by CSK occurs at positions 288, 327, 338, and 343. Tyr-344 carries the phosphotyrosine; by CSK and TNK2 modification. Lys-367 participates in a covalent cross-link: Glycyl lysine isopeptide (Lys-Gly) (interchain with G-Cter in SUMO). At Tyr-374 the chain carries Phosphotyrosine; by CSK. Residue Lys-485 forms a Glycyl lysine isopeptide (Lys-Gly) (interchain with G-Cter in SUMO) linkage. Phosphotyrosine; by CSK occurs at positions 499 and 516. Residues 516 to 883 (YYFPPQKTCL…GKVKPIYFHT (368 aa)) are interaction with LPXN. The nuclear receptor DNA-binding region spans 523 to 596 (TCLICGDEAS…AGMTLGARKL (74 aa)). 2 consecutive NR C4-type zinc fingers follow at residues 524-544 (CLICGDEASGCHYGALTCGSC) and 560-584 (CASRNDCTIDKFRRKNCPSCRLRKC). The tract at residues 536-626 (YGALTCGSCK…TEESSQKLTV (91 aa)) is interaction with HIPK3. The interval 556–883 (QKYLCASRND…GKVKPIYFHT (328 aa)) is interaction with CCAR1. Residues 589 to 883 (MTLGARKLKK…GKVKPIYFHT (295 aa)) are interaction with KAT7. Residue Ser-615 is modified to Phosphoserine; by STK4/MST1. An NR LBD domain is found at 633–864 (ECQPIFLNVL…DFPEMMAEII (232 aa)). Asn-670 and Arg-717 together coordinate 17beta-hydroxy-5alpha-androstan-3-one. Glycyl lysine isopeptide (Lys-Gly) (interchain with G-Cter in ubiquitin) cross-links involve residues Lys-810 and Lys-812. Residue Thr-842 participates in 17beta-hydroxy-5alpha-androstan-3-one binding. Tyr-880 is modified (phosphotyrosine; by CSK).

Belongs to the nuclear hormone receptor family. NR3 subfamily. Binds DNA as a homodimer. Part of a ternary complex containing AR, EFCAB6/DJBP and PARK7. Interacts with HIPK3 and NR0B2 in the presence of androgen. The ligand binding domain interacts with KAT7/HBO1 in the presence of dihydrotestosterone. Interacts with EFCAB6/DJBP, PQBP1, RANBP9, RBAK, SPDEF, SRA1, TGFB1I1 and RREB1. Interacts with ZMIZ1/ZIMP10 and ZMIZ2/ZMIP7 which both enhance its transactivation activity. Interacts with SLC30A9 and RAD54L2/ARIP4. Interacts with MACROD1 (via macro domain). Interacts via the ligand-binding domain with LXXLL and FXXLF motifs from NCOA1, NCOA2, NCOA3 and MAGEA11. Interacts (via nuclear receptor DNA binding domain and nuclear receptor ligand binding domain) with NCOA4. The AR N-terminal poly-Gln region binds Ran resulting in enhancement of AR-mediated transactivation. Ran-binding decreases as the poly-Gln length increases. Interacts with HIP1 (via coiled coil domain). Interacts (via ligand-binding domain) with TRIM68. Interacts with TNK2. Interacts with USP26. Interacts with RNF6. Interacts (regulated by RNF6 probably through polyubiquitination) with RNF14; regulates AR transcriptional activity. Interacts with PRMT2 and TRIM24. Interacts with RACK1. Interacts with RANBP10; this interaction enhances dihydrotestosterone-induced AR transcriptional activity. Interacts with PRPF6 in a hormone-independent way; this interaction enhances dihydrotestosterone-induced AR transcriptional activity. Interacts with STK4/MST1. Interacts with ZIPK/DAPK3. Interacts with LPXN. Interacts with MAK. Part of a complex containing AR, MAK and NCOA3. Interacts with CRY1. Interacts with CCAR1 and GATA2. Interacts with ZNF318. Interacts with BUD31. Interacts with ARID4A. Interacts with ARID4B. Interacts (via NR LBD domain) with ZBTB7A; the interaction is direct and androgen-dependent. Interacts with NCOR1. Interacts with NCOR2. Interacts with CRY2 in a ligand-dependent manner. In terms of processing, phosphorylated in prostate cancer cells in response to several growth factors including EGF. Phosphorylation is induced by c-Src kinase (CSK). Tyr-499 is one of the major phosphorylation sites and an increase in phosphorylation and Src kinase activity is associated with prostate cancer progression. Phosphorylation by TNK2 enhances the DNA-binding and transcriptional activity. Phosphorylation at Ser-61 by CDK9 regulates AR promoter selectivity and cell growth. Post-translationally, sumoylated on Lys-367 (major) and Lys-485. Ubiquitinated. Deubiquitinated by USP26. 'Lys-6' and 'Lys-27'-linked polyubiquitination by RNF6 modulates AR transcriptional activity and specificity. Palmitoylated by ZDHHC7 and ZDHHC21. Palmitoylation is required for plasma membrane targeting and for rapid intracellular signaling via ERK and AKT kinases and cAMP generation.

It is found in the nucleus. Its subcellular location is the cytoplasm. Functionally, steroid hormone receptors are ligand-activated transcription factors that regulate eukaryotic gene expression and affect cellular proliferation and differentiation in target tissues. Transcription factor activity is modulated by bound coactivator and corepressor proteins like ZBTB7A that recruits NCOR1 and NCOR2 to the androgen response elements/ARE on target genes, negatively regulating androgen receptor signaling and androgen-induced cell proliferation. Transcription activation is also down-regulated by NR0B2. Activated, but not phosphorylated, by HIPK3 and ZIPK/DAPK3. This Eulemur fulvus collaris (Collared brown lemur) protein is Androgen receptor (AR).